Consider the following 855-residue polypeptide: DNA mismatch repair protein MutS (855 aa).

613 to 620 (GPNMGGKS) contributes to the ATP binding site. The disordered stretch occupies residues 795 to 816 (ETTSLPHEVPSQQSGKPASPMQ). Residues 796–816 (TTSLPHEVPSQQSGKPASPMQ) show a composition bias toward polar residues.

Belongs to the DNA mismatch repair MutS family.

Functionally, this protein is involved in the repair of mismatches in DNA. It is possible that it carries out the mismatch recognition step. This protein has a weak ATPase activity. The sequence is that of DNA mismatch repair protein MutS from Pseudomonas paraeruginosa (strain DSM 24068 / PA7) (Pseudomonas aeruginosa (strain PA7)).